We begin with the raw amino-acid sequence, 304 residues long: Large ribosomal subunit protein uL18 (304 aa).

It belongs to the universal ribosomal protein uL18 family. As to quaternary structure, component of a hexameric 5S RNP precursor complex, composed of 5S RNA, RRS1, RPF2, RPL5, RPL11 and SYO1; this complex acts as a precursor for ribosome assembly.

The protein resides in the cytoplasm. In terms of biological role, component of the ribosome, a large ribonucleoprotein complex responsible for the synthesis of proteins in the cell. The small ribosomal subunit (SSU) binds messenger RNAs (mRNAs) and translates the encoded message by selecting cognate aminoacyl-transfer RNA (tRNA) molecules. The large subunit (LSU) contains the ribosomal catalytic site termed the peptidyl transferase center (PTC), which catalyzes the formation of peptide bonds, thereby polymerizing the amino acids delivered by tRNAs into a polypeptide chain. The nascent polypeptides leave the ribosome through a tunnel in the LSU and interact with protein factors that function in enzymatic processing, targeting, and the membrane insertion of nascent chains at the exit of the ribosomal tunnel. This is Large ribosomal subunit protein uL18 from Chaetomium thermophilum (strain DSM 1495 / CBS 144.50 / IMI 039719) (Thermochaetoides thermophila).